The chain runs to 104 residues: Small ribosomal subunit protein uS10 (104 aa).

This sequence belongs to the universal ribosomal protein uS10 family. In terms of assembly, part of the 30S ribosomal subunit.

Functionally, involved in the binding of tRNA to the ribosomes. This chain is Small ribosomal subunit protein uS10, found in Thermoplasma acidophilum (strain ATCC 25905 / DSM 1728 / JCM 9062 / NBRC 15155 / AMRC-C165).